The sequence spans 130 residues: Cyclin-dependent kinase 4 inhibitor B (130 aa).

ANK repeat units lie at residues 5–34 (SSDA…DPNA), 38–66 (FGRR…EPNC), 71–100 (TLTR…RLDV), and 104–130 (WGRL…ATGD). A Phosphothreonine modification is found at T12.

This sequence belongs to the CDKN2 cyclin-dependent kinase inhibitor family. As to quaternary structure, heterodimer of CDKN2B with CDK4 or CDK6. As to expression, expressed ubiquitously.

In terms of biological role, interacts strongly with CDK4 and CDK6. Potent inhibitor. Potential effector of TGF-beta induced cell cycle arrest. In Mus musculus (Mouse), this protein is Cyclin-dependent kinase 4 inhibitor B (Cdkn2b).